The sequence spans 629 residues: uncharacterized protein (629 aa).

M1 is subject to N-acetylmethionine. The tract at residues 308–395 (VDPEPEPDPP…PGRRSRARNA (88 aa)) is disordered. Positions 322-334 (SANEPASQPNSRS) are enriched in polar residues. Residues 451-587 (LVIFVVDASG…VAEGAAAVVV (137 aa)) form the VWFA domain.

The protein belongs to the Mg-chelatase subunits D/I family.

This is an uncharacterized protein from Mycobacterium tuberculosis (strain ATCC 25618 / H37Rv).